Reading from the N-terminus, the 393-residue chain is NAD(P)H-quinone oxidoreductase subunit H, chloroplastic (393 aa).

This sequence belongs to the complex I 49 kDa subunit family. As to quaternary structure, NDH is composed of at least 16 different subunits, 5 of which are encoded in the nucleus.

Its subcellular location is the plastid. It localises to the chloroplast thylakoid membrane. The enzyme catalyses a plastoquinone + NADH + (n+1) H(+)(in) = a plastoquinol + NAD(+) + n H(+)(out). The catalysed reaction is a plastoquinone + NADPH + (n+1) H(+)(in) = a plastoquinol + NADP(+) + n H(+)(out). In terms of biological role, NDH shuttles electrons from NAD(P)H:plastoquinone, via FMN and iron-sulfur (Fe-S) centers, to quinones in the photosynthetic chain and possibly in a chloroplast respiratory chain. The immediate electron acceptor for the enzyme in this species is believed to be plastoquinone. Couples the redox reaction to proton translocation, and thus conserves the redox energy in a proton gradient. The protein is NAD(P)H-quinone oxidoreductase subunit H, chloroplastic of Nuphar advena (Common spatterdock).